Here is a 669-residue protein sequence, read N- to C-terminus: Phosphatidylinositol-3-phosphate phosphatase MTMR1 (669 aa).

N-acetylmethionine is present on M1. Residues 1–17 (MDRPVAAAAAASAASCE) show a composition bias toward low complexity. The disordered stretch occupies residues 1–55 (MDRPVAAAAAASAASCEGAGGPGPGPGASWRPSRVAGGASASSRHPSIETLDSPT). 2 positions are modified to phosphoserine: S47 and S53. Positions 94 to 165 (NKLAQMEEAP…GVISRVEKIG (72 aa)) constitute a GRAM domain. The region spanning 230-605 (GWKVYDPVSE…SHLELWVNYY (376 aa)) is the Myotubularin phosphatase domain. 3 residues coordinate a 1,2-diacyl-sn-glycero-3-phospho-(1D-myo-inositol-3-phosphate): N355, N380, and I381. C442 functions as the Phosphocysteine intermediate in the catalytic mechanism. Residues S443, D444, G445, W446, D447, R448, and R488 each contribute to the a 1,2-diacyl-sn-glycero-3-phospho-(1D-myo-inositol-3-phosphate) site. S443 provides a ligand contact to phosphate. Positions 445, 446, 447, and 448 each coordinate phosphate. Positions 612 to 669 (MRPQMPIHQNLKELLAIKAELQKRVEDLQREMATRTISSSSERGSSPTHSATPVHTSV) are required for dimerization. The tract at residues 644 to 669 (ATRTISSSSERGSSPTHSATPVHTSV) is disordered. Residues 649–661 (SSSSERGSSPTHS) are compositionally biased toward low complexity.

This sequence belongs to the protein-tyrosine phosphatase family. Non-receptor class myotubularin subfamily. Homodimer. In terms of tissue distribution, widely expressed. Detected in skeletal muscle, heart, lung, liver and brain.

It is found in the cell membrane. The protein localises to the cytoplasm. The catalysed reaction is a 1,2-diacyl-sn-glycero-3-phospho-(1D-myo-inositol-3-phosphate) + H2O = a 1,2-diacyl-sn-glycero-3-phospho-(1D-myo-inositol) + phosphate. The enzyme catalyses 1,2-dioctanoyl-sn-glycero-3-phospho-(1-D-myo-inositol-3-phosphate) + H2O = 1,2-dioctanoyl-sn-glycero-3-phospho-(1D-myo-inositol) + phosphate. It catalyses the reaction a 1,2-diacyl-sn-glycero-3-phospho-(1D-myo-inositol-3,5-bisphosphate) + H2O = a 1,2-diacyl-sn-glycero-3-phospho-(1D-myo-inositol-5-phosphate) + phosphate. Functionally, lipid phosphatase that specifically dephosphorylates the D-3 position of phosphatidylinositol 3-phosphate, generating phosphatidylinositol. Could also dephosphorylate phosphatidylinositol 3,5-bisphosphate to produce phosphatidylinositol 5-phosphate. The sequence is that of Phosphatidylinositol-3-phosphate phosphatase MTMR1 from Mus musculus (Mouse).